The chain runs to 713 residues: Cadherin-13 (713 aa).

An N-terminal signal peptide occupies residues 1-22; it reads MQPRTPLVLCVLLSQVLLLTSA. The propeptide occupies 23–138; the sequence is EDLDCIPGFQ…RTSPVPRQKR (116 aa). 2 N-linked (GlcNAc...) asparagine glycosylation sites follow: Asn-52 and Asn-86. Cadherin domains are found at residues 139–245, 246–363, 364–477, 478–585, and 584–690; these read SIVV…RPIF, REGP…SPKF, TKKE…GPVF, YPDP…APFI, and FIYP…VDSN. N-linked (GlcNAc...) asparagine glycosylation is found at Asn-382, Asn-489, Asn-500, Asn-530, Asn-598, Asn-638, and Asn-671. Asn-690 carries GPI-anchor amidated asparagine lipidation. A propeptide spans 691-713 (removed in mature form); the sequence is AVGALRFSLPSLLLLSLFSLACL.

In terms of assembly, by contrast to classical cadherins, homodimerization in trans is not mediated by cadherin EC1 domain strand-swapping, but instead through a homophilic adhesive interface which joins two elongated EC1-EC2 domains through a region near their Ca2+-binding sites to form a tetrahedral, X-like shape.

It localises to the cell membrane. The protein resides in the cytoplasm. Functionally, cadherins are calcium-dependent cell adhesion proteins. They preferentially interact with themselves in a homophilic manner in connecting cells; cadherins may thus contribute to the sorting of heterogeneous cell types. May act as a negative regulator of neural cell growth. This chain is Cadherin-13 (CDH13), found in Pongo abelii (Sumatran orangutan).